The following is a 404-amino-acid chain: MSSGALFPSLVPGSRGSSSKYLVEFRAGKMSLKGSTVTPDKRKGLVYIQQTDDSLIHFCWKDRTSGSVEDDLIIFPDDCEFKRVSQCTTGRVYVLKFKAGSKRLFFWMQEPKTDKDEEYCRKLNEYLNNPPMPGALGGSGSGSHELSALGGEGGLQSLLGNMSHNQLMQLIGPTGLGGLGGLGALTGPGLASLLGSGGPTTSSSSSSSRSQSAAVTPSSTTSSTRTTSAPVAPAAAPATTPSPAVSSNDGASEATSPTQPIQLSDLQNILATMNVPATGEGGQQVDLASVLTPEIMAPILANAEVQERLTPYLPSGESLPQTADEIQNTLTSPQFQQALGMFSAALASGQLGPLMSQFGLPADAVDAANKGDIEAFAKAMQSTSSQKERESSEKKEEEEDMSLD.

The 114-residue stretch at 17–130 (SSSKYLVEFR…RKLNEYLNNP (114 aa)) folds into the Pru domain. A compositionally biased stretch (low complexity) spans 195–247 (GSGGPTTSSSSSSSRSQSAAVTPSSTTSSTRTTSAPVAPAAAPATTPSPAVSS). Disordered stretches follow at residues 195 to 258 (GSGG…TSPT) and 376 to 404 (FAKA…MSLD). Positions 248–258 (NDGASEATSPT) are enriched in polar residues. One can recognise a DEUBAD domain in the interval 278-390 (TGEGGQQVDL…QSTSSQKERE (113 aa)). Positions 386-395 (QKERESSEKK) are enriched in basic and acidic residues.

The protein belongs to the ADRM1 family. In terms of assembly, component of the 19S proteasome regulatory particle complex. The 26S proteasome consists of a 20S core particle (CP) and two 19S regulatory subunits (RP).

The protein localises to the cytoplasm. It is found in the nucleus. Its function is as follows. Component of the 26S proteasome, a multiprotein complex involved in the ATP-dependent degradation of ubiquitinated proteins. This complex plays a key role in the maintenance of protein homeostasis by removing misfolded or damaged proteins, which could impair cellular functions, and by removing proteins whose functions are no longer required. Therefore, the proteasome participates in numerous cellular processes, including cell cycle progression, apoptosis, or DNA damage repair. Within the complex, functions as a proteasomal ubiquitin receptor. The sequence is that of Proteasomal ubiquitin receptor ADRM1-A (adrm1-a) from Xenopus laevis (African clawed frog).